Consider the following 391-residue polypeptide: Recombination and repair protein (391 aa).

60–67 (GPSKSFKS) lines the ATP pocket. Positions 364-374 (KSPESKSKSAA) are enriched in basic and acidic residues. The tract at residues 364–391 (KSPESKSKSAADLETDLEQLSDMEEFNE) is disordered. Over residues 376–391 (LETDLEQLSDMEEFNE) the composition is skewed to acidic residues.

It belongs to the RecA family.

Its function is as follows. Important in genetic recombination, DNA repair, and replication. Possesses pairing and strand-transfer activity. Interacts with dda and gene 32 proteins. This chain is Recombination and repair protein (UVSX), found in Enterobacteria phage T4 (Bacteriophage T4).